We begin with the raw amino-acid sequence, 179 residues long: IIQRSRFLAKAAPAASEEEALAFLAAHREPQATHNAYAYRIGPLYRFSDDGEPRAPGRPILHAIEAAGLDRVVVLVVRYFGGVKLGAGGLVRAYGGVAAEALRRAPKAPLLDWVEVAFRVPFPEVGRVHGLLRARHLEAEEAYLPEGVRFALRLPPGGEGGPCLKALSDLTRGRLWVEG.

This sequence belongs to the IMPACT family.

This is IMPACT family member in pol 5'region from Thermus thermophilus.